The chain runs to 29 residues: ELIGAANRDTKSFSINRKDAKERVAKAAR.

Residues Glu-1–Arg-29 are disordered. A compositionally biased stretch (basic and acidic residues) spans Arg-8 to Arg-29.

It belongs to the universal ribosomal protein uS7 family. In terms of assembly, part of the 30S ribosomal subunit.

In terms of biological role, one of the primary rRNA binding proteins, it binds directly to 16S rRNA where it nucleates assembly of the head domain of the 30S subunit. Is located at the subunit interface close to the decoding center. This chain is Small ribosomal subunit protein uS7 (rps7), found in Methanosarcina thermophila.